A 610-amino-acid chain; its full sequence is Calmegin (610 aa).

Positions 1-19 (MHFQAFWLCLGLLFISINA) are cleaved as a signal peptide. Residues 20–471 (EFMDDDVETE…LMAAAEGHPW (452 aa)) lie on the Lumenal side of the membrane. K128 is subject to N6-acetyllysine. C151 and C185 are joined by a disulfide. Residues 258 to 338 (VPPIKPPKEI…KPDDWNEDTD (81 aa)) are disordered. Positions 263-284 (PPKEIEDPNDKKPEEWDERAKI) are enriched in basic and acidic residues. Tandem repeats lie at residues 267–280 (IEDP…EWDE), 284–297 (IPDP…DWDE), 303–316 (IEDS…GWLD), 322–335 (IPDP…DWNE), 339–352 (GEWE…PACR), 356–369 (GEWK…PKYK), 370–383 (GVWR…PNYQ), and 384–397 (GIWS…PDYF). The span at 317-332 (DEPKFIPDPNAEKPDD) shows a compositional bias: basic and acidic residues. The interval 317–350 (DEPKFIPDPNAEKPDDWNEDTDGEWEAPQILNPA) is interaction with PPIB. C351 and C355 are oxidised to a cystine. The helical transmembrane segment at 472 to 492 (LWLIYLVTAGVPIALITSFCW) threads the bilayer. Residues 493–610 (PRKVKKKHKD…SVRKRRVRKD (118 aa)) lie on the Cytoplasmic side of the membrane. Basic and acidic residues predominate over residues 521–548 (QEEKEEKAALEKPMDLEEEKKQNDGEML). A disordered region spans residues 521-610 (QEEKEEKAAL…SVRKRRVRKD (90 aa)). The span at 549–571 (EKEEESEPEEKSEEEIEIIEGQE) shows a compositional bias: acidic residues. Residues S560, S576, S579, S581, S591, S594, and S601 each carry the phosphoserine modification. Residues 601 to 610 (SVRKRRVRKD) are compositionally biased toward basic residues.

This sequence belongs to the calreticulin family. Interacts with PPIB. Interacts with ADAM2. Interacts with PDILT. As to expression, detected in testis (at protein level). Detected in testis.

The protein resides in the endoplasmic reticulum membrane. Its function is as follows. Functions during spermatogenesis as a chaperone for a range of client proteins that are important for sperm adhesion onto the egg zona pellucida and for subsequent penetration of the zona pellucida. Required for normal sperm migration from the uterus into the oviduct. Required for normal male fertility. Binds calcium ions. This Homo sapiens (Human) protein is Calmegin (CLGN).